The primary structure comprises 177 residues: Decaprenylphosphoryl-5-phosphoribose phosphatase (177 aa).

4 helical membrane-spanning segments follow: residues 35–55, 62–82, 124–144, and 150–170; these read HFGEHCIGWLILALLGAIALP, LVAGAGAFVAHAIAVLIKRLV, GLPLPVVLVPPMALSRILLGV, and VAVGVALGATVGAIVDSVGGG.

The protein belongs to the PA-phosphatase related phosphoesterase family.

It localises to the cell membrane. It carries out the reaction trans,octa-cis-decaprenylphospho-beta-D-ribofuranose 5-phosphate + H2O = trans,octa-cis-decaprenylphospho-beta-D-ribofuranose + phosphate. The protein operates within cell wall biogenesis; cell wall polysaccharide biosynthesis. Functionally, phosphatase involved in the biosynthesis of decaprenylphosphoryl arabinose (DPA), which serves as the arabinose donor for the biosynthesis of arabinogalactan, the major mycobacterial cell wall polysaccharide. Catalyzes the dephosphorylation of decaprenylphosphoryl-5-phosphoribose (DPPR) to decaprenyl-phosphoribose (DPR). This chain is Decaprenylphosphoryl-5-phosphoribose phosphatase, found in Mycobacterium tuberculosis (strain CDC 1551 / Oshkosh).